The following is a 356-amino-acid chain: Sensor protein BasS (356 aa).

Topologically, residues 1-13 (MRFQRRAMTLRQR) are cytoplasmic. Residues 14 to 34 (LMLTIGLILLVFQLISTFWLW) form a helical membrane-spanning segment. At 35–64 (HESTEQIQLFEQALRDNRNNDRHIMHEIRE) the chain is on the periplasmic side. The chain crosses the membrane as a helical span at residues 65–88 (AVASLIVPGVFMVSLTLLICYQAV). An HAMP domain is found at 89–141 (RRITRPLAELQKELEARTADNLAPIAIHSSTLEIESVVSAINQLVTRLTTTLD). The Cytoplasmic segment spans residues 89-356 (RRITRPLAEL…TRAWVLLKKA (268 aa)). The region spanning 149–356 (DVAHELRTPL…TRAWVLLKKA (208 aa)) is the Histidine kinase domain. The residue at position 152 (His-152) is a Phosphohistidine; by autocatalysis.

Autophosphorylated.

Its subcellular location is the cell inner membrane. It catalyses the reaction ATP + protein L-histidine = ADP + protein N-phospho-L-histidine.. Member of the two-component regulatory system BasS/BasR. Autophosphorylates and activates BasR by phosphorylation. Plays a role in the adaptation of the organism to the host environment, in particular to neutrophils, and therefore it plays a role in virulence as well. The sequence is that of Sensor protein BasS (basS) from Salmonella typhimurium (strain LT2 / SGSC1412 / ATCC 700720).